A 513-amino-acid chain; its full sequence is uncharacterized protein (513 aa).

Positions 1 to 48 (MGSSEEQSVPGDDFYEESGDLNTGLSLVLRPAKSNEGESSLSSPKGSK) are disordered. A compositionally biased stretch (polar residues) spans 37 to 48 (GESSLSSPKGSK). 3 positions are modified to phosphoserine: Ser43, Ser84, and Ser123. Disordered regions lie at residues 210–229 (DGNH…GDLA), 236–287 (TRDS…GSKS), 390–414 (AKED…AEPP), and 453–481 (SVLS…TQGC).

This is an uncharacterized protein from Mus musculus (Mouse).